The chain runs to 169 residues: X polypeptide (169 aa).

This sequence belongs to the IagB/IpgF/P19 family.

The protein is X polypeptide (yubQ) of Escherichia coli (strain K12).